Reading from the N-terminus, the 443-residue chain is MESLASLYKNHIATLQERTRDALARFKLDALLIHSGELFNVFLDDHPYPFKVNPQFKAWVPVTQVPNCWLLVDGVNKPKLWFYLPVDYWHNVEPLPNSFWTEDVEVIALPKADGIGSLLPAARGNIGYIGPVPERALQLGIEASNINPKGVIDYLHYYRSFKTEYELACMREAQKMAVNGHRAAEEAFRSGMSEFDINIAYLTATGHRDTDVPYSNIVALNEHAAVLHYTKLDHQAPEEMRSFLLDAGAEYNGYAADLTRTWSAKSDNDYAQLVKDVNDEQLALIATMKAGVSYVDYHIQFHQRIAKLLRKHQIITDMSEEAMVENDLTGPFMPHGIGHPLGLQVHDVAGFMQDDSGTHLAAPARYPYLRCTRILQPGMVLTIEPGIYFIESLLAPWREGQFSKHFNWQKIEALKPFGGIRIEDNVVIHENNVENMTRDLKLA.

5 residues coordinate Mn(2+): D246, D257, H339, E384, and E423.

It belongs to the peptidase M24B family. Bacterial-type prolidase subfamily. Mn(2+) is required as a cofactor.

It catalyses the reaction Xaa-L-Pro dipeptide + H2O = an L-alpha-amino acid + L-proline. Its function is as follows. Splits dipeptides with a prolyl residue in the C-terminal position. This chain is Xaa-Pro dipeptidase, found in Escherichia coli O81 (strain ED1a).